Here is a 52-residue protein sequence, read N- to C-terminus: UPF0391 membrane protein Tgr7_2500 (52 aa).

2 helical membrane-spanning segments follow: residues Trp-4–Ala-24 and Trp-29–Gly-49.

This sequence belongs to the UPF0391 family.

The protein localises to the cell membrane. The polypeptide is UPF0391 membrane protein Tgr7_2500 (Thioalkalivibrio sulfidiphilus (strain HL-EbGR7)).